The following is a 293-amino-acid chain: Protease HtpX (293 aa).

Helical transmembrane passes span 4–24 (IALF…VLSL) and 34–54 (GLMI…LLMS). His139 is a Zn(2+) binding site. The active site involves Glu140. His143 serves as a coordination point for Zn(2+). 2 consecutive transmembrane segments (helical) span residues 158–178 (VVNT…AGFM) and 193–213 (LIYF…ASII). Residue Glu222 coordinates Zn(2+).

It belongs to the peptidase M48B family. It depends on Zn(2+) as a cofactor.

It localises to the cell inner membrane. The polypeptide is Protease HtpX (Escherichia coli (strain ATCC 8739 / DSM 1576 / NBRC 3972 / NCIMB 8545 / WDCM 00012 / Crooks)).